The primary structure comprises 82 residues: Small ribosomal subunit protein eS27 (82 aa).

Residues 37–59 (CPGCFTITTVFSHAQTVVICQGC) form a C4-type zinc finger.

It belongs to the eukaryotic ribosomal protein eS27 family. As to quaternary structure, component of the small ribosomal subunit (SSU). Mature N.crassa ribosomes consist of a small (40S) and a large (60S) subunit. The 40S small subunit contains 1 molecule of ribosomal RNA (18S rRNA) and at least 32 different proteins. The large 60S subunit contains 3 rRNA molecules (26S, 5.8S and 5S rRNA) and at least 42 different proteins. Zn(2+) serves as cofactor.

The protein localises to the cytoplasm. In terms of biological role, component of the ribosome, a large ribonucleoprotein complex responsible for the synthesis of proteins in the cell. The small ribosomal subunit (SSU) binds messenger RNAs (mRNAs) and translates the encoded message by selecting cognate aminoacyl-transfer RNA (tRNA) molecules. The large subunit (LSU) contains the ribosomal catalytic site termed the peptidyl transferase center (PTC), which catalyzes the formation of peptide bonds, thereby polymerizing the amino acids delivered by tRNAs into a polypeptide chain. The nascent polypeptides leave the ribosome through a tunnel in the LSU and interact with protein factors that function in enzymatic processing, targeting, and the membrane insertion of nascent chains at the exit of the ribosomal tunnel. The sequence is that of Small ribosomal subunit protein eS27 (crp-6) from Neurospora crassa (strain ATCC 24698 / 74-OR23-1A / CBS 708.71 / DSM 1257 / FGSC 987).